Here is a 306-residue protein sequence, read N- to C-terminus: Ribonuclease Z (306 aa).

Positions 63, 65, 67, 68, 140, 211, and 269 each coordinate Zn(2+). D67 acts as the Proton acceptor in catalysis.

Belongs to the RNase Z family. In terms of assembly, homodimer. It depends on Zn(2+) as a cofactor.

The enzyme catalyses Endonucleolytic cleavage of RNA, removing extra 3' nucleotides from tRNA precursor, generating 3' termini of tRNAs. A 3'-hydroxy group is left at the tRNA terminus and a 5'-phosphoryl group is left at the trailer molecule.. In terms of biological role, zinc phosphodiesterase, which displays some tRNA 3'-processing endonuclease activity. Probably involved in tRNA maturation, by removing a 3'-trailer from precursor tRNA. The sequence is that of Ribonuclease Z from Listeria innocua serovar 6a (strain ATCC BAA-680 / CLIP 11262).